The following is a 317-amino-acid chain: Glycine--tRNA ligase alpha subunit (317 aa).

It belongs to the class-II aminoacyl-tRNA synthetase family. As to quaternary structure, tetramer of two alpha and two beta subunits.

It is found in the cytoplasm. The enzyme catalyses tRNA(Gly) + glycine + ATP = glycyl-tRNA(Gly) + AMP + diphosphate. This Pseudomonas fluorescens (strain SBW25) protein is Glycine--tRNA ligase alpha subunit.